We begin with the raw amino-acid sequence, 155 residues long: Protein FAM201A (155 aa).

The tract at residues 130–155 (QDQGCGQHRPHSPRLVDIALPGGGWT) is disordered.

This Homo sapiens (Human) protein is Protein FAM201A (FAM201A).